A 205-amino-acid chain; its full sequence is Small ribosomal subunit protein uS4 (205 aa).

The disordered stretch occupies residues 18-49 (NIWGRPKSPVNKREYGPGQHGQRRKGKLSDFG). In terms of domain architecture, S4 RNA-binding spans 94 to 157 (RRLDTVVYRA…KQLALVLEAN (64 aa)).

It belongs to the universal ribosomal protein uS4 family. Part of the 30S ribosomal subunit. Contacts protein S5. The interaction surface between S4 and S5 is involved in control of translational fidelity.

One of the primary rRNA binding proteins, it binds directly to 16S rRNA where it nucleates assembly of the body of the 30S subunit. Functionally, with S5 and S12 plays an important role in translational accuracy. The chain is Small ribosomal subunit protein uS4 from Nitrobacter hamburgensis (strain DSM 10229 / NCIMB 13809 / X14).